A 203-amino-acid chain; its full sequence is Holliday junction branch migration complex subunit RuvA (203 aa).

Residues 1 to 63 form a domain I region; that stretch reads MIFSVRGEVL…EDSMTLYGFS (63 aa). The interval 64–141 is domain II; that stretch reads DAENRDLFLA…GPVGASGLTV (78 aa). Residues 141–145 are flexible linker; the sequence is VGTAA. The segment at 146–203 is domain III; that stretch reads DGNAVRGSVVEALVGLGFAAKQAEEATDQVLDGELGKDGAVATSSALRAALSLLGKTR.

The protein belongs to the RuvA family. Homotetramer. Forms an RuvA(8)-RuvB(12)-Holliday junction (HJ) complex. HJ DNA is sandwiched between 2 RuvA tetramers; dsDNA enters through RuvA and exits via RuvB. An RuvB hexamer assembles on each DNA strand where it exits the tetramer. Each RuvB hexamer is contacted by two RuvA subunits (via domain III) on 2 adjacent RuvB subunits; this complex drives branch migration. In the full resolvosome a probable DNA-RuvA(4)-RuvB(12)-RuvC(2) complex forms which resolves the HJ.

It localises to the cytoplasm. Its function is as follows. The RuvA-RuvB-RuvC complex processes Holliday junction (HJ) DNA during genetic recombination and DNA repair, while the RuvA-RuvB complex plays an important role in the rescue of blocked DNA replication forks via replication fork reversal (RFR). RuvA specifically binds to HJ cruciform DNA, conferring on it an open structure. The RuvB hexamer acts as an ATP-dependent pump, pulling dsDNA into and through the RuvAB complex. HJ branch migration allows RuvC to scan DNA until it finds its consensus sequence, where it cleaves and resolves the cruciform DNA. This is Holliday junction branch migration complex subunit RuvA from Mycobacterium leprae (strain Br4923).